A 196-amino-acid chain; its full sequence is Heat shock protein beta-8 (196 aa).

The tract at residues 1-35 (MADGQMPFSCHYPSRLRRDPFRDSPLPSRLLDDDF) is disordered. Residues serine 24 and serine 57 each carry the phosphoserine modification. A Phosphothreonine modification is found at threonine 63. Arginine 71 and arginine 78 each carry asymmetric dimethylarginine. In terms of domain architecture, sHSP spans 74 to 185 (TAAARFGVPA…PFGESNFNNE (112 aa)). Residue serine 87 is modified to Phosphoserine. The segment at 176–196 (PFGESNFNNELPQDSQEVTCT) is disordered. The span at 178–196 (GESNFNNELPQDSQEVTCT) shows a compositional bias: polar residues.

The protein belongs to the small heat shock protein (HSP20) family. In terms of assembly, monomer. Forms a ternary complex with BAG3 and HSPA1A. Component of the chaperone-assisted selective autophagy (CASA) complex consisting of BAG3, HSPA8/HSC70, HSPB8 and STUB1/CHIP. Interacts with HSPB1. Interacts with DNAJB6. Interacts with BAG3. In terms of processing, phosphorylated.

It localises to the cytoplasm. Its subcellular location is the nucleus. Its function is as follows. Involved in the chaperone-assisted selective autophagy (CASA), a crucial process for protein quality control, particularly in mechanical strained cells and tissues such as muscle. Displays temperature-dependent chaperone activity. This chain is Heat shock protein beta-8 (HSPB8), found in Canis lupus familiaris (Dog).